The primary structure comprises 313 residues: 3-O-acetylpapaveroxine carboxylesterase CXE2 (313 aa).

The short motif at 72–74 is the Involved in the stabilization of the negatively charged intermediate by the formation of the oxyanion hole element; that stretch reads HGG. Catalysis depends on residues serine 158, aspartate 262, and histidine 292.

The protein belongs to the 'GDXG' lipolytic enzyme family.

The catalysed reaction is 3-O-acetylpapaveroxine + H2O = narcotine hemiacetal + acetate + H(+). It participates in alkaloid biosynthesis. Its function is as follows. Carboxylesterase involved in the biosynthesis of the benzylisoquinoline alkaloid noscapine. Converts 3-O-acetylpapaveroxine to narcotine hemiacetal. The sequence is that of 3-O-acetylpapaveroxine carboxylesterase CXE2 from Papaver somniferum (Opium poppy).